A 195-amino-acid polypeptide reads, in one-letter code: Cyclin-dependent kinase inhibitor 7 (195 aa).

A compositionally biased stretch (basic and acidic residues) spans 1–11 (MSETKPKRDSE). Disordered stretches follow at residues 1–50 (MSET…SVSD), 61–80 (EEED…SSET), and 117–154 (SSEN…TQAE). 2 stretches are compositionally biased toward low complexity: residues 37 to 50 (SSSS…SVSD) and 68 to 80 (SSSI…SSET). The residue at position 151 (Thr-151) is a Phosphothreonine; by KIN10.

The protein belongs to the CDI family. ICK/KRP subfamily. As to quaternary structure, specifically interacts with CDKA-1, but not with CDKB1-1. Interacts with CYCD4-1. Binds to FBL17. Post-translationally, ubiquitinated by SCF(FBL17). Ubiquitination leads to its subsequent degradation, thus controlling cell cycle progression. As to expression, expressed in flowers, in developing pollen, and at lower levels in roots and leaves.

It is found in the nucleus. It localises to the nucleoplasm. Binds and inhibits CYCD2-1/CDKA-1 complex kinase activity. May target specifically CDKA-1. This chain is Cyclin-dependent kinase inhibitor 7 (KRP7), found in Arabidopsis thaliana (Mouse-ear cress).